Consider the following 232-residue polypeptide: Lipopolysaccharide core heptose(II) kinase WaaY (232 aa).

It belongs to the protein kinase superfamily. RfaY/WaaY family.

The enzyme catalyses alpha-D-Glc-(1-&gt;3)-[L-alpha-D-Hep-(1-&gt;7)]-L-alpha-D-Hep-(1-&gt;3)-4-O-PO3(2-)-L-alpha-D-Hep-(1-&gt;5)-[alpha-Kdo-(2-&gt;4)]-alpha-Kdo-(2-&gt;6)-lipid A + ATP = alpha-D-Glc-(1-&gt;3)-[L-alpha-D-Hep-(1-&gt;7)]-4-O-PO3(2-)-L-alpha-D-Hep-(1-&gt;3)-4-O-PO3(2-)-L-alpha-D-Hep-(1-&gt;5)-[alpha-Kdo-(2-&gt;4)]-alpha-Kdo-(2-&gt;6)-lipid A + ADP + H(+). It participates in bacterial outer membrane biogenesis; LPS core biosynthesis. In terms of biological role, kinase involved in the biosynthesis of the core oligosaccharide region of lipopolysaccharide (LPS). Catalyzes the phosphorylation of the second heptose unit (HepII) of the inner core. The chain is Lipopolysaccharide core heptose(II) kinase WaaY from Escherichia coli (strain K12).